Reading from the N-terminus, the 138-residue chain is Large ribosomal subunit protein uL14 (138 aa).

This sequence belongs to the universal ribosomal protein uL14 family. In terms of assembly, part of the 50S ribosomal subunit. Forms a cluster with proteins L3 and L24e, part of which may contact the 16S rRNA in 2 intersubunit bridges. Contacts initiation factor aIF-6.

It localises to the cytoplasm. Functionally, binds to 23S rRNA. Forms part of two intersubunit bridges in the 70S ribosome. The protein is Large ribosomal subunit protein uL14 of Saccharolobus solfataricus (strain ATCC 35092 / DSM 1617 / JCM 11322 / P2) (Sulfolobus solfataricus).